Consider the following 298-residue polypeptide: Inosose dehydratase (298 aa).

It belongs to the IolE/MocC family. It depends on glutathione as a cofactor. Requires Co(2+) as cofactor. Mn(2+) is required as a cofactor.

The catalysed reaction is scyllo-inosose = 3D-3,5/4-trihydroxycyclohexane-1,2-dione + H2O. Functionally, catalyzes the dehydration of inosose (2-keto-myo-inositol, 2KMI or 2,4,6/3,5-pentahydroxycyclohexanone) to 3D-(3,5/4)-trihydroxycyclohexane-1,2-dione (D-2,3-diketo-4-deoxy-epi-inositol). This chain is Inosose dehydratase, found in Histophilus somni (strain 129Pt) (Haemophilus somnus).